Consider the following 392-residue polypeptide: Copper-containing nitrite reductase (392 aa).

An N-terminal signal peptide occupies residues 1–18; the sequence is MKRQALAAMIASLFALAA. Cys-19 carries N-palmitoyl cysteine lipidation. The S-diacylglycerol cysteine moiety is linked to residue Cys-19. Residues 30-49 form a disordered region; that stretch reads ETPAASAEAASSAAQATAET. 2 Plastocyanin-like domains span residues 101-195 and 245-346; these read WTFD…ILVE and GHVG…LKVE. Cu cation-binding residues include His-134, His-139, His-174, Cys-175, His-183, and Met-188. Residue His-139 participates in substrate binding. His-280 lines the substrate pocket. His-329 serves as a coordination point for Cu cation. The tract at residues 367-392 is disordered; sequence GAASAPAASAPAASAPAASASEKSVY. Repeat copies occupy residues 368–372, 373–377, 378–382, and 383–387. A 4 X 5 AA tandem repeats of A-A-S-A-P region spans residues 368–387; sequence AASAPAASAPAASAPAASAS.

This sequence belongs to the multicopper oxidase family. In terms of assembly, homotrimer. Cu(+) is required as a cofactor. The cofactor is Cu(2+). Palmitoylated.

The protein localises to the cell outer membrane. The catalysed reaction is nitric oxide + Fe(III)-[cytochrome c] + H2O = Fe(II)-[cytochrome c] + nitrite + 2 H(+). Its function is as follows. Catalyzes the reduction of nitrite to nitric oxide (NO), probably with azurin as electron donor. Essential for growth and survival in oxygen-depleted environments. Can also provide protection against killing by normal human sera. The protein is Copper-containing nitrite reductase (aniA) of Neisseria gonorrhoeae.